The chain runs to 318 residues: Ribose-phosphate pyrophosphokinase 1 (318 aa).

ATP-binding positions include 43-45 and 102-103; these read DGE and RQ. Positions 136 and 176 each coordinate Mg(2+). Lys-199 is a catalytic residue. D-ribose 5-phosphate-binding positions include Arg-201, Asp-225, and 229–233; that span reads DTAGT.

It belongs to the ribose-phosphate pyrophosphokinase family. Class I subfamily. As to quaternary structure, homohexamer. Mg(2+) is required as a cofactor.

It is found in the cytoplasm. It carries out the reaction D-ribose 5-phosphate + ATP = 5-phospho-alpha-D-ribose 1-diphosphate + AMP + H(+). The protein operates within metabolic intermediate biosynthesis; 5-phospho-alpha-D-ribose 1-diphosphate biosynthesis; 5-phospho-alpha-D-ribose 1-diphosphate from D-ribose 5-phosphate (route I): step 1/1. Involved in the biosynthesis of the central metabolite phospho-alpha-D-ribosyl-1-pyrophosphate (PRPP) via the transfer of pyrophosphoryl group from ATP to 1-hydroxyl of ribose-5-phosphate (Rib-5-P). The chain is Ribose-phosphate pyrophosphokinase 1 from Listeria monocytogenes serotype 4b (strain F2365).